Reading from the N-terminus, the 360-residue chain is Phenylalanine--tRNA ligase alpha subunit (360 aa).

Position 260 (Glu260) interacts with Mg(2+).

The protein belongs to the class-II aminoacyl-tRNA synthetase family. Phe-tRNA synthetase alpha subunit type 1 subfamily. Tetramer of two alpha and two beta subunits. Mg(2+) is required as a cofactor.

The protein resides in the cytoplasm. It carries out the reaction tRNA(Phe) + L-phenylalanine + ATP = L-phenylalanyl-tRNA(Phe) + AMP + diphosphate + H(+). In Cereibacter sphaeroides (strain ATCC 17029 / ATH 2.4.9) (Rhodobacter sphaeroides), this protein is Phenylalanine--tRNA ligase alpha subunit.